A 129-amino-acid polypeptide reads, in one-letter code: Keratin-associated protein 5-6 (129 aa).

6 repeat units span residues 28–31 (CCVP), 34–37 (CCKP), 40–43 (CCVP), 90–93 (CCKP), 109–112 (CCKP), and 119–122 (CCVP). Positions 28–112 (CCVPICCCKP…SCCQSSCCKP (85 aa)) are 6 X 4 AA repeats of C-C-X-P.

The protein belongs to the KRTAP type 5 family. Interacts with hair keratins. As to expression, expressed in hair root and not in skin. Expressed also in liver and skeletal muscle.

Functionally, in the hair cortex, hair keratin intermediate filaments are embedded in an interfilamentous matrix, consisting of hair keratin-associated protein (KRTAP), which are essential for the formation of a rigid and resistant hair shaft through their extensive disulfide bond cross-linking with abundant cysteine residues of hair keratins. The matrix proteins include the high-sulfur and high-glycine-tyrosine keratins. The polypeptide is Keratin-associated protein 5-6 (KRTAP5-6) (Homo sapiens (Human)).